A 30-amino-acid chain; its full sequence is uncharacterized protein (30 aa).

Residues 9-26 form a helical membrane-spanning segment; the sequence is YRLVIIVLISVYYRYRFF.

The protein localises to the plastid. The protein resides in the chloroplast membrane. This is an uncharacterized protein from Marchantia polymorpha (Common liverwort).